Reading from the N-terminus, the 159-residue chain is Endoribonuclease YbeY (159 aa).

The Zn(2+) site is built by His124, His128, and His134.

The protein belongs to the endoribonuclease YbeY family. Requires Zn(2+) as cofactor.

It is found in the cytoplasm. Functionally, single strand-specific metallo-endoribonuclease involved in late-stage 70S ribosome quality control and in maturation of the 3' terminus of the 16S rRNA. This is Endoribonuclease YbeY from Halalkalibacterium halodurans (strain ATCC BAA-125 / DSM 18197 / FERM 7344 / JCM 9153 / C-125) (Bacillus halodurans).